The primary structure comprises 476 residues: Membrane-bound lytic murein transglycosylase F (476 aa).

An N-terminal signal peptide occupies residues 1 to 15 (MRSFLLILFCVSLLT). The tract at residues 16 to 258 (GCQGERVDAA…HLNEKYFAHV (243 aa)) is non-LT domain. The tract at residues 259 to 476 (KRFDYVDTRA…QSEISAAQPN (218 aa)) is LT domain. Glu-303 is an active-site residue. The segment at 456–476 (EAQQQTAEKQSQSEISAAQPN) is disordered.

It in the N-terminal section; belongs to the bacterial solute-binding protein 3 family. The protein in the C-terminal section; belongs to the transglycosylase Slt family.

The protein localises to the cell outer membrane. It carries out the reaction Exolytic cleavage of the (1-&gt;4)-beta-glycosidic linkage between N-acetylmuramic acid (MurNAc) and N-acetylglucosamine (GlcNAc) residues in peptidoglycan, from either the reducing or the non-reducing ends of the peptidoglycan chains, with concomitant formation of a 1,6-anhydrobond in the MurNAc residue.. Its function is as follows. Murein-degrading enzyme that degrades murein glycan strands and insoluble, high-molecular weight murein sacculi, with the concomitant formation of a 1,6-anhydromuramoyl product. Lytic transglycosylases (LTs) play an integral role in the metabolism of the peptidoglycan (PG) sacculus. Their lytic action creates space within the PG sacculus to allow for its expansion as well as for the insertion of various structures such as secretion systems and flagella. In Shewanella loihica (strain ATCC BAA-1088 / PV-4), this protein is Membrane-bound lytic murein transglycosylase F.